Here is a 177-residue protein sequence, read N- to C-terminus: Small ribosomal subunit protein eS10z (177 aa).

The disordered stretch occupies residues 90–177 (TLKKSAKPGG…AAAPSGSGFP (88 aa)). The segment covering 108 to 140 (DRQRGPPRSDGDRPRFGDRDGYRGGPRGGDEKG) has biased composition (basic and acidic residues). Low complexity predominate over residues 141–150 (GAPADFQPSF). Gly residues predominate over residues 151–165 (QGGGGRPGFGRGAGG). Low complexity predominate over residues 166 to 177 (YSAAAPSGSGFP).

Belongs to the eukaryotic ribosomal protein eS10 family.

The protein resides in the cytoplasm. This is Small ribosomal subunit protein eS10z (RPS10A) from Arabidopsis thaliana (Mouse-ear cress).